Consider the following 167-residue polypeptide: Phosphopantetheine adenylyltransferase (167 aa).

S9 contributes to the substrate binding site. ATP contacts are provided by residues 9 to 10 (SF) and H17. Substrate contacts are provided by K41, V78, and R92. ATP-binding positions include 93 to 95 (GLR), E103, and 128 to 134 (SRPITAT).

It belongs to the bacterial CoaD family. As to quaternary structure, homohexamer. Mg(2+) serves as cofactor.

It localises to the cytoplasm. It catalyses the reaction (R)-4'-phosphopantetheine + ATP + H(+) = 3'-dephospho-CoA + diphosphate. Its pathway is cofactor biosynthesis; coenzyme A biosynthesis; CoA from (R)-pantothenate: step 4/5. Its function is as follows. Reversibly transfers an adenylyl group from ATP to 4'-phosphopantetheine, yielding dephospho-CoA (dPCoA) and pyrophosphate. The sequence is that of Phosphopantetheine adenylyltransferase from Rhizobium rhizogenes (strain K84 / ATCC BAA-868) (Agrobacterium radiobacter).